The sequence spans 474 residues: MTKKLHIKTWGCQMNEYDSSKMADLLGSTHGYELTEIAEEADVLLLNTCSIREKAQEKVFHQLGRWKALKDLNPNLIIGVGGCVASQEGAHIRERAHYVDVIFGPQTLHRLPEMINHVQGTRSPIVDISFPEIEKFDRLPEPRADGPTAFVSIMEGCNKYCTFCVVPYTRGEEVSRPCDDVLFEIAQLAAQGVREVNLLGQNVNAYRGETYDGEICSFAELLRLVAAIDGIDRVRFTTSHPIEFTDDIISVYEDTPELVSFLHLPVQSGSDRVLTMMKRRHTALEYKAIIRKLHNARPGILISSDFIIGFPGETQADFEQTMKLIADVNFDMSYSFVYSARPGTPAADMVDDVLEEEKKQRLYLLQDRITKQAMRFSRLMLGTVQRILVEGTSRKSVMELSGRTENNRVVNFEGTPDMIGKFVDVEIVDVYTNSLRGIVVRTEDQMDLRVHESPSSVIARTRKENEIGVGFYQP.

An MTTase N-terminal domain is found at Lys3–Gly120. [4Fe-4S] cluster-binding residues include Cys12, Cys49, Cys83, Cys157, Cys161, and Cys164. The region spanning Arg143 to Arg375 is the Radical SAM core domain. Residues Arg378 to Arg441 form the TRAM domain.

This sequence belongs to the methylthiotransferase family. MiaB subfamily. Monomer. [4Fe-4S] cluster serves as cofactor.

The protein resides in the cytoplasm. The enzyme catalyses N(6)-dimethylallyladenosine(37) in tRNA + (sulfur carrier)-SH + AH2 + 2 S-adenosyl-L-methionine = 2-methylsulfanyl-N(6)-dimethylallyladenosine(37) in tRNA + (sulfur carrier)-H + 5'-deoxyadenosine + L-methionine + A + S-adenosyl-L-homocysteine + 2 H(+). Functionally, catalyzes the methylthiolation of N6-(dimethylallyl)adenosine (i(6)A), leading to the formation of 2-methylthio-N6-(dimethylallyl)adenosine (ms(2)i(6)A) at position 37 in tRNAs that read codons beginning with uridine. The polypeptide is tRNA-2-methylthio-N(6)-dimethylallyladenosine synthase (Pectobacterium atrosepticum (strain SCRI 1043 / ATCC BAA-672) (Erwinia carotovora subsp. atroseptica)).